The chain runs to 467 residues: UDP-N-acetylmuramate--L-alanine ligase (467 aa).

Position 114 to 120 (114 to 120 (GTHGKTT)) interacts with ATP.

Belongs to the MurCDEF family.

It localises to the cytoplasm. The catalysed reaction is UDP-N-acetyl-alpha-D-muramate + L-alanine + ATP = UDP-N-acetyl-alpha-D-muramoyl-L-alanine + ADP + phosphate + H(+). Its pathway is cell wall biogenesis; peptidoglycan biosynthesis. Functionally, cell wall formation. In Bradyrhizobium sp. (strain BTAi1 / ATCC BAA-1182), this protein is UDP-N-acetylmuramate--L-alanine ligase.